The sequence spans 1053 residues: Integrin alpha-3 (1053 aa).

An N-terminal signal peptide occupies residues 1–32; it reads MGPGPCRVPRAPGWLLRALALMVAACGRVAFA. Topologically, residues 33-993 are extracellular; sequence FNLDTRFLVV…LVEELPAEIE (961 aa). FG-GAP repeat units follow at residues 38–103, 110–171, 185–235, 236–293, 294–355, 357–412, and 416–478; these read RFLV…KDDC, EKSD…DLQL, CNSN…WDLS, EYSY…GGDL, QRKQ…ASFP, QPSL…GLLR, and QIIH…VARP. N-linked (GlcNAc...) asparagine glycosylation occurs at asparagine 86. 3 disulfide bridges follow: cysteine 94/cysteine 103, cysteine 140/cysteine 162, and cysteine 185/cysteine 197. Intrachain disulfides connect cysteine 486/cysteine 491 and cysteine 497/cysteine 551. N-linked (GlcNAc...) asparagine glycans are attached at residues asparagine 501, asparagine 512, asparagine 574, and asparagine 606. Cysteine 616 and cysteine 622 are disulfide-bonded. Residues asparagine 657, asparagine 699, asparagine 843, and asparagine 859 are each glycosylated (N-linked (GlcNAc...) asparagine). A disulfide bond links cysteine 695 and cysteine 704. Intrachain disulfides connect cysteine 848–cysteine 906 and cysteine 913–cysteine 918. Residues 865–890 are disordered; it reads PGVTPLSPQRRRRQLDPGGDQSSPPV. 4 N-linked (GlcNAc...) asparagine glycosylation sites follow: asparagine 925, asparagine 928, asparagine 937, and asparagine 971. A helical membrane pass occupies residues 994-1021; it reads LWLVLVAVGAGLLLLGLIILLLWKCGFF. Cysteine 1018 carries the S-palmitoyl cysteine lipid modification. Topologically, residues 1022–1053 are cytoplasmic; it reads KRARTRALYEAKRQKAEMKSQPSETERLTDDY.

Belongs to the integrin alpha chain family. Heterodimer of an alpha and a beta subunit. The alpha subunit is composed of a heavy and a light chain linked by a disulfide bond. Alpha-3 associates with beta-1. Interacts with HPS5. Interacts with FAP (seprase); the interaction occurs at the cell surface of invadopodia membrane in a collagen-dependent manner. Isoform 1 and isoform 2 are expressed in heart and brain. Only isoform 1 is detected in lung.

It localises to the cell membrane. The protein localises to the cell projection. It is found in the invadopodium membrane. The protein resides in the filopodium membrane. Functionally, integrin alpha-3/beta-1 is a receptor for fibronectin, laminin, collagen, epiligrin, thrombospondin and CSPG4. Integrin alpha-3/beta-1 provides a docking site for FAP (seprase) at invadopodia plasma membranes in a collagen-dependent manner and hence may participate in the adhesion, formation of invadopodia and matrix degradation processes, promoting cell invasion. Alpha-3/beta-1 may mediate with LGALS3 the stimulation by CSPG4 of endothelial cells migration. In Mus musculus (Mouse), this protein is Integrin alpha-3 (Itga3).